A 472-amino-acid chain; its full sequence is ESX-3 secretion system protein EccD3 (472 aa).

Helical transmembrane passes span 121-141 (WGIAHIQRGALAAVIAVALLA), 155-175 (LAGLLAVAGIAVASALAGLLI), 183-203 (GIALSIAALVPIGAALALAVP), 211-231 (VLLGAAGVAAWSLIALMIPSA), 236-256 (VVAFFTAAAVVGASVALAAGA), 258-278 (LLWQLPLLSIGCGLIVAALLV), 327-347 (QSGFIAAAVLLSVLGSVAIAV), 349-369 (PEALSVVGWYLVAATAAAATL), 381-401 (AWLLAQPYLVAGVLLVFYTAT), 405-425 (VAAFGAVLVLAVLMLAWVVVA), and 450-470 (GLDVSLIPVMAYLVGLFAWVL).

Belongs to the EccD/Snm4 family. As to quaternary structure, part of the ESX-3 / type VII secretion system (T7SS), which is composed of cytosolic and membrane components. The ESX-3 membrane complex is composed of EccB3, EccC3, EccD3 and EccE3.

The protein localises to the cell inner membrane. In terms of biological role, part of the ESX-3 specialized secretion system, which is important for iron and zinc uptake or homeostasis. This Mycobacterium tuberculosis (strain CDC 1551 / Oshkosh) protein is ESX-3 secretion system protein EccD3.